Consider the following 467-residue polypeptide: Signal transduction histidine-protein kinase BaeS (467 aa).

The Cytoplasmic segment spans residues 1–11 (MKFWRPGITGK). The helical transmembrane segment at 12-32 (LFLAIFATCIVLLISMHWAVR) threads the bilayer. Over 33–167 (ISFERGFIDY…NFDKQQRQTS (135 aa)) the chain is Periplasmic. A helical transmembrane segment spans residues 168-186 (WLIVALATLLAALATFLLA). One can recognise an HAMP domain in the interval 187-239 (RGLLAPVKRLVDGTHKLAAGDFTTRVTPTSEDELGKLAQDFNQLASTLEKNQQ). At 187–467 (RGLLAPVKRL…PLERDLQREV (281 aa)) the chain is on the cytoplasmic side. The Histidine kinase domain maps to 247–461 (DISHELRTPL…SITVELPLER (215 aa)). Histidine 250 bears the Phosphohistidine; by autocatalysis mark.

Autophosphorylated.

The protein localises to the cell inner membrane. It carries out the reaction ATP + protein L-histidine = ADP + protein N-phospho-L-histidine.. In terms of biological role, member of the two-component regulatory system BaeS/BaeR which responds to envelope stress. Activates expression of periplasmic chaperone spy in response to spheroplast formation, indole and P pili protein PapG overexpression. Activates BaeR by phosphorylation which then activates the mdtABCD and probably the CRISPR-Cas casABCDE-ygbT-ygbF operons. In Escherichia coli (strain K12), this protein is Signal transduction histidine-protein kinase BaeS.